Consider the following 79-residue polypeptide: MIKPLIEFCVGNLASGSQAALEKLEKDPNLDVMEYGCLGYCGICFEGPFALVNGEVVQGATVEELVNNVYEYLDENPMF.

Belongs to the UPF0349 family.

In Bacillus cereus (strain ATCC 10987 / NRS 248), this protein is UPF0349 protein BCE_5075.